The chain runs to 208 residues: Small ribosomal subunit protein uS4 (208 aa).

An S4 RNA-binding domain is found at 97–160 (TRLDNVCYRM…QKQLRVQEAL (64 aa)).

Belongs to the universal ribosomal protein uS4 family. In terms of assembly, part of the 30S ribosomal subunit. Contacts protein S5. The interaction surface between S4 and S5 is involved in control of translational fidelity.

Its function is as follows. One of the primary rRNA binding proteins, it binds directly to 16S rRNA where it nucleates assembly of the body of the 30S subunit. With S5 and S12 plays an important role in translational accuracy. This chain is Small ribosomal subunit protein uS4, found in Xanthomonas oryzae pv. oryzae (strain MAFF 311018).